We begin with the raw amino-acid sequence, 429 residues long: Polypyrimidine tract-binding protein homolog 2 (429 aa).

Ser-2 is subject to N-acetylserine. RRM domains follow at residues 18–96, 110–197, and 243–323; these read KVLH…YSNR, GNVL…YSAH, and SNVL…YSRH. A disordered region spans residues 331–429; the sequence is NNDRSRDYTM…QHYGGPGPMH (99 aa). Residues 367–381 are compositionally biased toward low complexity; sequence GGSHHQQQQQPQGGW. Positions 382 to 397 are enriched in gly residues; sequence VQPGGQGSMGMGGGGH.

It localises to the nucleus. Functionally, plays a role in pre-mRNA splicing. Binds to the polypyrimidine tract of introns. May promote the binding of U2 snRNP to pre-mRNA. This is Polypyrimidine tract-binding protein homolog 2 from Arabidopsis thaliana (Mouse-ear cress).